We begin with the raw amino-acid sequence, 105 residues long: UPF0145 protein lpl0253 (105 aa).

It belongs to the UPF0145 family.

The sequence is that of UPF0145 protein lpl0253 from Legionella pneumophila (strain Lens).